Consider the following 104-residue polypeptide: L-rhamnose mutarotase (104 aa).

A substrate-binding site is contributed by tyrosine 18. Residue histidine 22 is the Proton donor of the active site. Residues tyrosine 41 and 76 to 77 each bind substrate; that span reads WW.

Belongs to the rhamnose mutarotase family. As to quaternary structure, homodimer.

Its subcellular location is the cytoplasm. It catalyses the reaction alpha-L-rhamnose = beta-L-rhamnose. Its pathway is carbohydrate metabolism; L-rhamnose metabolism. Involved in the anomeric conversion of L-rhamnose. In Sinorhizobium fredii (strain NBRC 101917 / NGR234), this protein is L-rhamnose mutarotase.